The primary structure comprises 293 residues: Ribosomal protein L11 methyltransferase (293 aa).

Residues Thr-145, Gly-166, Asp-188, and Asn-230 each contribute to the S-adenosyl-L-methionine site.

Belongs to the methyltransferase superfamily. PrmA family.

The protein localises to the cytoplasm. The enzyme catalyses L-lysyl-[protein] + 3 S-adenosyl-L-methionine = N(6),N(6),N(6)-trimethyl-L-lysyl-[protein] + 3 S-adenosyl-L-homocysteine + 3 H(+). In terms of biological role, methylates ribosomal protein L11. The protein is Ribosomal protein L11 methyltransferase of Actinobacillus pleuropneumoniae serotype 5b (strain L20).